A 391-amino-acid chain; its full sequence is 3-ketoacyl-CoA thiolase (391 aa).

The active-site Acyl-thioester intermediate is the Cys-95. Catalysis depends on proton acceptor residues His-347 and Cys-377.

This sequence belongs to the thiolase-like superfamily. Thiolase family. Heterotetramer of two alpha chains (FadB) and two beta chains (FadA).

It is found in the cytoplasm. It carries out the reaction an acyl-CoA + acetyl-CoA = a 3-oxoacyl-CoA + CoA. It functions in the pathway lipid metabolism; fatty acid beta-oxidation. Functionally, catalyzes the final step of fatty acid oxidation in which acetyl-CoA is released and the CoA ester of a fatty acid two carbons shorter is formed. This chain is 3-ketoacyl-CoA thiolase, found in Saccharophagus degradans (strain 2-40 / ATCC 43961 / DSM 17024).